Reading from the N-terminus, the 237-residue chain is tRNA1(Val) (adenine(37)-N6)-methyltransferase (237 aa).

It belongs to the methyltransferase superfamily. tRNA (adenine-N(6)-)-methyltransferase family.

It is found in the cytoplasm. The catalysed reaction is adenosine(37) in tRNA1(Val) + S-adenosyl-L-methionine = N(6)-methyladenosine(37) in tRNA1(Val) + S-adenosyl-L-homocysteine + H(+). Specifically methylates the adenine in position 37 of tRNA(1)(Val) (anticodon cmo5UAC). The sequence is that of tRNA1(Val) (adenine(37)-N6)-methyltransferase from Pasteurella multocida (strain Pm70).